The chain runs to 212 residues: Large ribosomal subunit protein uL3 (212 aa).

Gln153 bears the N5-methylglutamine mark.

This sequence belongs to the universal ribosomal protein uL3 family. Part of the 50S ribosomal subunit. Forms a cluster with proteins L14 and L19. In terms of processing, methylated by PrmB.

Functionally, one of the primary rRNA binding proteins, it binds directly near the 3'-end of the 23S rRNA, where it nucleates assembly of the 50S subunit. This is Large ribosomal subunit protein uL3 from Shewanella piezotolerans (strain WP3 / JCM 13877).